The sequence spans 940 residues: Lon protease homolog 1, mitochondrial (940 aa).

The N-terminal 61 residues, Met-1–Gly-61, are a transit peptide targeting the mitochondrion. Residues Lys-70–Thr-90 form a disordered region. Ser-74 bears the Phosphoserine mark. The 210-residue stretch at Val-100 to Met-309 folds into the Lon N-terminal domain. Residue Gly-464–Thr-471 participates in ATP binding. Residues Gln-751–Tyr-935 enclose the Lon proteolytic domain. Active-site residues include Ser-841 and Lys-884.

This sequence belongs to the peptidase S16 family. In terms of assembly, homohexamer or homoheptamer. Organized in a ring with a central cavity.

Its subcellular location is the mitochondrion matrix. The enzyme catalyses Hydrolysis of proteins in presence of ATP.. Functionally, ATP-dependent serine protease that mediates the selective degradation of misfolded, unassembled or oxidatively damaged polypeptides as well as certain short-lived regulatory proteins in the mitochondrial matrix. May also have a chaperone function in the assembly of inner membrane protein complexes. Participates in the regulation of mitochondrial gene expression and in the maintenance of the integrity of the mitochondrial genome. Binds to mitochondrial DNA in a site-specific manner. The sequence is that of Lon protease homolog 1, mitochondrial (LON1) from Arabidopsis thaliana (Mouse-ear cress).